Reading from the N-terminus, the 193-residue chain is Orotate phosphoribosyltransferase (193 aa).

117–125 (EDVVTTGLS) is a 5-phospho-alpha-D-ribose 1-diphosphate binding site. Orotate contacts are provided by threonine 121 and arginine 149.

It belongs to the purine/pyrimidine phosphoribosyltransferase family. PyrE subfamily. As to quaternary structure, homodimer. Mg(2+) serves as cofactor.

The enzyme catalyses orotidine 5'-phosphate + diphosphate = orotate + 5-phospho-alpha-D-ribose 1-diphosphate. It participates in pyrimidine metabolism; UMP biosynthesis via de novo pathway; UMP from orotate: step 1/2. Functionally, catalyzes the transfer of a ribosyl phosphate group from 5-phosphoribose 1-diphosphate to orotate, leading to the formation of orotidine monophosphate (OMP). The chain is Orotate phosphoribosyltransferase from Erythrobacter litoralis (strain HTCC2594).